A 364-amino-acid polypeptide reads, in one-letter code: Putative methylthioribose-1-phosphate isomerase (364 aa).

Substrate is bound by residues 57–59, R100, and Q206; that span reads RGA. D247 functions as the Proton donor in the catalytic mechanism. Position 257–258 (257–258) interacts with substrate; the sequence is NK.

It belongs to the eIF-2B alpha/beta/delta subunits family. MtnA subfamily.

The enzyme catalyses 5-(methylsulfanyl)-alpha-D-ribose 1-phosphate = 5-(methylsulfanyl)-D-ribulose 1-phosphate. Functionally, catalyzes the interconversion of methylthioribose-1-phosphate (MTR-1-P) into methylthioribulose-1-phosphate (MTRu-1-P). The sequence is that of Putative methylthioribose-1-phosphate isomerase from Pyrococcus horikoshii (strain ATCC 700860 / DSM 12428 / JCM 9974 / NBRC 100139 / OT-3).